Reading from the N-terminus, the 210-residue chain is Outer-membrane lipoprotein LolB (210 aa).

The N-terminal stretch at 1-18 is a signal peptide; sequence MKKFTKILSLSTLLFLAG. The N-palmitoyl cysteine moiety is linked to residue C19. C19 is lipidated: S-diacylglycerol cysteine.

Belongs to the LolB family. In terms of assembly, monomer.

It is found in the cell outer membrane. Plays a critical role in the incorporation of lipoproteins in the outer membrane after they are released by the LolA protein. This is Outer-membrane lipoprotein LolB from Actinobacillus pleuropneumoniae serotype 7 (strain AP76).